The primary structure comprises 382 residues: Ribosomal RNA large subunit methyltransferase G (382 aa).

This sequence belongs to the methyltransferase superfamily. RlmG family.

It localises to the cytoplasm. The catalysed reaction is guanosine(1835) in 23S rRNA + S-adenosyl-L-methionine = N(2)-methylguanosine(1835) in 23S rRNA + S-adenosyl-L-homocysteine + H(+). Functionally, specifically methylates the guanine in position 1835 (m2G1835) of 23S rRNA. The polypeptide is Ribosomal RNA large subunit methyltransferase G (Aliivibrio fischeri (strain MJ11) (Vibrio fischeri)).